We begin with the raw amino-acid sequence, 127 residues long: Protein yippee-like 4 (127 aa).

A Yippee domain is found at 27-124 (RTYSCVHCRA…IEMSHMVKDN (98 aa)). Zn(2+) contacts are provided by C31, C34, C87, and C90. Phosphothreonine is present on residues T92 and T93. Position 98 is a phosphotyrosine (Y98).

It belongs to the yippee family.

The protein resides in the nucleus. Its subcellular location is the nucleolus. The chain is Protein yippee-like 4 (YPEL4) from Chlorocebus aethiops (Green monkey).